A 176-amino-acid polypeptide reads, in one-letter code: Respiratory supercomplex factor 1, mitochondrial (176 aa).

One can recognise an HIG1 domain in the interval 6-97; it reads VPSSFEGNPQ…TERQQRKEFE (92 aa). A run of 2 helical transmembrane segments spans residues 33-49 and 69-86; these read PLIP…LYRA and IYAQ…GMYF. The tract at residues 129–158 is disordered; that stretch reads RHAAMEAAAAEAGKKTAPHDAARSAIERSE. Positions 140–158 are enriched in basic and acidic residues; sequence AGKKTAPHDAARSAIERSE.

The protein belongs to the RCF1 family. Associates with the respiratory chain complex III/complex IV supercomplex.

It is found in the mitochondrion membrane. Functionally, cytochrome c oxidase subunit which plays a role in assembly of respiratory supercomplexes. The protein is Respiratory supercomplex factor 1, mitochondrial (rcf1) of Aspergillus flavus (strain ATCC 200026 / FGSC A1120 / IAM 13836 / NRRL 3357 / JCM 12722 / SRRC 167).